The primary structure comprises 89 residues: Large ribosomal subunit protein bL27 (89 aa).

Belongs to the bacterial ribosomal protein bL27 family.

The protein is Large ribosomal subunit protein bL27 of Cytophaga hutchinsonii (strain ATCC 33406 / DSM 1761 / CIP 103989 / NBRC 15051 / NCIMB 9469 / D465).